A 186-amino-acid chain; its full sequence is Lipoprotein signal peptidase (186 aa).

The next 3 membrane-spanning stretches (helical) occupy residues 11–31, 44–64, and 70–90; these read WIPL…KLLV, VLGD…FSIG, and VLRT…IVFS. Catalysis depends on residues D128 and D150. A helical membrane pass occupies residues 145–165; sequence AFNIADAVIMTCGLLLIISFI.

This sequence belongs to the peptidase A8 family.

Its subcellular location is the cell inner membrane. The enzyme catalyses Release of signal peptides from bacterial membrane prolipoproteins. Hydrolyzes -Xaa-Yaa-Zaa-|-(S,diacylglyceryl)Cys-, in which Xaa is hydrophobic (preferably Leu), and Yaa (Ala or Ser) and Zaa (Gly or Ala) have small, neutral side chains.. The protein operates within protein modification; lipoprotein biosynthesis (signal peptide cleavage). Its function is as follows. This protein specifically catalyzes the removal of signal peptides from prolipoproteins. This is Lipoprotein signal peptidase from Treponema pallidum (strain Nichols).